Consider the following 1441-residue polypeptide: Envelopment polyprotein (1441 aa).

The N-terminal stretch at 1–13 (MICILVLITVAAA) is a signal peptide. At 14–200 (SPVYQRCFQD…GSIANSICQN (187 aa)) the chain is on the lumenal side. The N-linked (GlcNAc...) asparagine; by host glycan is linked to asparagine 57. Positions 201–221 (IEIIILVTLTLLIFILLSILS) form a transmembrane segment. The Cytoplasmic segment spans residues 222-305 (KTYICYLLMP…RAARVMCKSK (84 aa)). A membrane pass occupies residues 306-326 (GPASILSIITAVLVLTFVTPI). At 327–361 (NSMVLGESKETFELEDLPDDMLEMASRINSYYLTC) the chain is on the lumenal side. The hydrophobic stretch at 362 to 382 (ILNYAVSWGLVIIGLLIGLLF) threads the membrane. Over 383–450 (KKYQHRFLNV…NCLVQYKAKW (68 aa)) the chain is Cytoplasmic. The segment at 451 to 471 (MMNFLIIYIFLILIKDSAIVV) is a transmembrane helix. The Lumenal portion of the chain corresponds to 472–1395 (QAAGTDFTTC…EPFKNLFGSY (924 aa)). N-linked (GlcNAc...) asparagine; by host glycosylation occurs at asparagine 490. The segment at 1066–1087 (WGCEEFGCLAVSDGCVFGSCQD) is fusion peptide. Asparagine 1177 is a glycosylation site (N-linked (GlcNAc...) asparagine; by host). A membrane pass occupies residues 1396–1416 (IGIFYTFIISIVVLLVIIYVL). At 1417–1433 (LPICFKLRDTLRKHEDA) the chain is on the cytoplasmic side.

This sequence belongs to the orthobunyaviruses M polyprotein family. As to quaternary structure, glycoprotein C and Glycoprotein N interact with each other.

It localises to the virion membrane. Its subcellular location is the host Golgi apparatus membrane. It is found in the host endoplasmic reticulum membrane. Glycoprotein C and glycoprotein N interact with each other and are present at the surface of the virion. They are able to attach the virion to a cell receptor and to promote fusion of membranes after endocytosis of the virion. This chain is Envelopment polyprotein (GP), found in Bunyavirus La Crosse (isolate Human/United States/L78/1978).